The chain runs to 397 residues: Major outer membrane porin, serovar L3 (397 aa).

The first 22 residues, 1-22 (MKKLLKSVLVFAALSSASSLQA), serve as a signal peptide directing secretion.

This sequence belongs to the chlamydial porin (CP) (TC 1.B.2) family. In terms of assembly, part of a disulfide cross-linked outer membrane complex (COMC) composed of the major outer membrane porin (MOMP), the small cysteine-rich protein (OmcA) and the large cysteine-rich periplasmic protein (OmcB).

It localises to the cell outer membrane. In terms of biological role, in elementary bodies (EBs, the infectious stage, which is able to survive outside the host cell) provides the structural integrity of the outer envelope through disulfide cross-links with the small cysteine-rich protein and the large cysteine-rich periplasmic protein. It has been described in publications as the Sarkosyl-insoluble COMC (Chlamydia outer membrane complex), and serves as the functional equivalent of peptidoglycan. Permits diffusion of specific solutes through the outer membrane. The chain is Major outer membrane porin, serovar L3 (ompA) from Chlamydia trachomatis.